Consider the following 497-residue polypeptide: Galactose-1-phosphate uridylyltransferase (497 aa).

The protein belongs to the galactose-1-phosphate uridylyltransferase type 2 family.

Its subcellular location is the cytoplasm. The catalysed reaction is alpha-D-galactose 1-phosphate + UDP-alpha-D-glucose = alpha-D-glucose 1-phosphate + UDP-alpha-D-galactose. The protein operates within carbohydrate metabolism; galactose metabolism. The polypeptide is Galactose-1-phosphate uridylyltransferase (Enterococcus faecalis (strain ATCC 700802 / V583)).